The sequence spans 164 residues: Glutamate uptake regulatory protein (164 aa).

Residues 5-66 (LDDFDIKILD…LLDPQKIGLG (62 aa)) enclose the HTH asnC-type domain. The segment at residues 24 to 43 (MAELSEKTGLSANACWRRIR) is a DNA-binding region (H-T-H motif).

Represses the secondary, H(+)-coupled glutamate uptake system (Gluemp) genes. The sequence is that of Glutamate uptake regulatory protein (grp) from Zymomonas mobilis subsp. mobilis (strain ATCC 10988 / DSM 424 / LMG 404 / NCIMB 8938 / NRRL B-806 / ZM1).